We begin with the raw amino-acid sequence, 85 residues long: MKVTLIAILTCAAVLVLHTTAAEELEAESQLMEVGMPDTELAAVDEERLVECSVSCEIEKEGNKDCKKKKCKGGWKCKFNMCVKV.

Positions 1-22 (MKVTLIAILTCAAVLVLHTTAA) are cleaved as a signal peptide. A propeptide spanning residues 23-48 (EELEAESQLMEVGMPDTELAAVDEER) is cleaved from the precursor. 3 disulfide bridges follow: Cys-52-Cys-66, Cys-56-Cys-77, and Cys-71-Cys-82.

It belongs to the neurotoxin 12 (Hwtx-2) family. 02 (Hwtx-2) subfamily. In terms of tissue distribution, expressed by the venom gland.

The protein resides in the secreted. Functionally, postsynaptic neurotoxin. The polypeptide is U4-theraphotoxin-Hhn1d (Cyriopagopus hainanus (Chinese bird spider)).